The chain runs to 2153 residues: RNA-directed RNA polymerase L (2153 aa).

Positions 36, 54, 97, 110, and 111 each coordinate Mn(2+). Residue Lys124 is the For endonuclease activity of the active site. One can recognise a RdRp catalytic domain in the interval 957–1143 (TGNVIKFKRR…AVNQEMWKSM (187 aa)). Residue Asp1100 coordinates Mg(2+). An interaction with the viral nucleoprotein region spans residues 1291-2153 (KQAFYSYKHT…FPHDPVSSFY (863 aa)).

The protein belongs to the Bunyavirales RNA polymerase family. As to quaternary structure, interacts with the viral nucleoprotein; this interaction is required for RdRp function. The cofactor is Mn(2+). It depends on Mg(2+) as a cofactor.

The protein localises to the host cytoplasm. Its subcellular location is the host perinuclear region. The catalysed reaction is RNA(n) + a ribonucleoside 5'-triphosphate = RNA(n+1) + diphosphate. In terms of biological role, RNA-dependent RNA polymerase, which is responsible for the replication and transcription of the viral RNA genome using antigenomic RNA as an intermediate. During transcription, synthesizes subgenomic RNAs and assures their capping by a cap-snatching mechanism, which involves the endonuclease activity cleaving the host capped pre-mRNAs. These short capped RNAs are then used as primers for viral transcription. Cleaves ssRNA substrates but not DNA. Seems to downregulate the expression of its own and heterologous mRNAs through its endonuclease activity. The polypeptide is RNA-directed RNA polymerase L (Sin Nombre orthohantavirus (SNV)).